The following is a 227-amino-acid chain: Ribosomal RNA large subunit methyltransferase E (227 aa).

The S-adenosyl-L-methionine site is built by glycine 78, tryptophan 80, aspartate 103, aspartate 119, and aspartate 143. Residue lysine 183 is the Proton acceptor of the active site.

Belongs to the class I-like SAM-binding methyltransferase superfamily. RNA methyltransferase RlmE family.

Its subcellular location is the cytoplasm. It catalyses the reaction uridine(2552) in 23S rRNA + S-adenosyl-L-methionine = 2'-O-methyluridine(2552) in 23S rRNA + S-adenosyl-L-homocysteine + H(+). Functionally, specifically methylates the uridine in position 2552 of 23S rRNA at the 2'-O position of the ribose in the fully assembled 50S ribosomal subunit. This chain is Ribosomal RNA large subunit methyltransferase E, found in Rickettsia conorii (strain ATCC VR-613 / Malish 7).